Here is a 90-residue protein sequence, read N- to C-terminus: UPF0335 protein RPA4190 (90 aa).

It belongs to the UPF0335 family.

The chain is UPF0335 protein RPA4190 from Rhodopseudomonas palustris (strain ATCC BAA-98 / CGA009).